Reading from the N-terminus, the 319-residue chain is Glucokinase (319 aa).

G8 to T13 contributes to the ATP binding site.

The protein belongs to the bacterial glucokinase family.

It is found in the cytoplasm. It catalyses the reaction D-glucose + ATP = D-glucose 6-phosphate + ADP + H(+). This chain is Glucokinase, found in Chromohalobacter salexigens (strain ATCC BAA-138 / DSM 3043 / CIP 106854 / NCIMB 13768 / 1H11).